The sequence spans 160 residues: 3-dehydroquinate dehydratase (160 aa).

Tyrosine 28 serves as the catalytic Proton acceptor. Positions 79, 85, and 92 each coordinate substrate. Catalysis depends on histidine 105, which acts as the Proton donor. Substrate-binding positions include 106-107 and arginine 116; that span reads MS.

The protein belongs to the type-II 3-dehydroquinase family. As to quaternary structure, homododecamer.

It catalyses the reaction 3-dehydroquinate = 3-dehydroshikimate + H2O. Its pathway is metabolic intermediate biosynthesis; chorismate biosynthesis; chorismate from D-erythrose 4-phosphate and phosphoenolpyruvate: step 3/7. In terms of biological role, catalyzes a trans-dehydration via an enolate intermediate. This Gloeobacter violaceus (strain ATCC 29082 / PCC 7421) protein is 3-dehydroquinate dehydratase.